Reading from the N-terminus, the 333-residue chain is Ubiquinol oxidase 2, mitochondrial (333 aa).

A helical membrane pass occupies residues 158 to 178 (AMMLETVAAVPGMVGGMLLHL). Fe cation is bound by residues glutamate 162, glutamate 201, and histidine 204. A helical membrane pass occupies residues 220-240 (LLVLAVQGVFFNAFFVLYILS). Residues glutamate 252, glutamate 303, and histidine 306 each contribute to the Fe cation site.

This sequence belongs to the alternative oxidase family. Homodimer; disulfide-linked. The cofactor is Fe cation.

The protein resides in the mitochondrion inner membrane. It carries out the reaction 2 a ubiquinol + O2 = 2 a ubiquinone + 2 H2O. Catalyzes the cyanide-resistant oxidation of ubiquinol and the reduction of molecular oxygen to water, but does not translocate protons and consequently is not linked to oxidative phosphorylation. May increase respiration when the cytochrome respiratory pathway is restricted, or in response to low temperatures. This chain is Ubiquinol oxidase 2, mitochondrial (AOX2), found in Glycine max (Soybean).